Reading from the N-terminus, the 143-residue chain is Cytochrome c-type biogenesis protein CcmE (143 aa).

The Cytoplasmic segment spans residues 1 to 8 (MNPVRRRK). The chain crosses the membrane as a helical; Signal-anchor for type II membrane protein span at residues 9-29 (LFILLFALTILSAAAALVLYA). Residues 30 to 143 (LRQNISLFYT…KSALADKVKQ (114 aa)) lie on the Periplasmic side of the membrane. Heme is bound by residues H124 and Y128.

It belongs to the CcmE/CycJ family.

Its subcellular location is the cell inner membrane. Functionally, heme chaperone required for the biogenesis of c-type cytochromes. Transiently binds heme delivered by CcmC and transfers the heme to apo-cytochromes in a process facilitated by CcmF and CcmH. This Legionella pneumophila (strain Corby) protein is Cytochrome c-type biogenesis protein CcmE.